Reading from the N-terminus, the 392-residue chain is Protein SRL2 (392 aa).

Ser11 is modified (phosphoserine). The segment at 18 to 52 (KPSETPKMEEEKLEVTNVNASSSKKVHKSKKSTSK) is disordered. The span at 21 to 31 (ETPKMEEEKLE) shows a compositional bias: basic and acidic residues. Over residues 41 to 50 (KKVHKSKKST) the composition is skewed to basic residues. Ser139 carries the phosphoserine modification. The interval 284 to 303 (EDSTAVTNENGHISSEKNLK) is disordered. Over residues 287–296 (TAVTNENGHI) the composition is skewed to polar residues.

The protein resides in the cytoplasm. It localises to the nucleus. The polypeptide is Protein SRL2 (SRL2) (Saccharomyces cerevisiae (strain ATCC 204508 / S288c) (Baker's yeast)).